Reading from the N-terminus, the 361-residue chain is Alanine racemase (361 aa).

K34 functions as the Proton acceptor; specific for D-alanine in the catalytic mechanism. K34 carries the N6-(pyridoxal phosphate)lysine modification. A substrate-binding site is contributed by R129. Catalysis depends on Y256, which acts as the Proton acceptor; specific for L-alanine. M304 serves as a coordination point for substrate.

Belongs to the alanine racemase family. As to quaternary structure, homodimer. It depends on pyridoxal 5'-phosphate as a cofactor.

It carries out the reaction L-alanine = D-alanine. It participates in amino-acid biosynthesis; D-alanine biosynthesis; D-alanine from L-alanine: step 1/1. Catalyzes the interconversion of L-alanine and D-alanine. May also act on other amino acids. In Corynebacterium glutamicum (strain ATCC 13032 / DSM 20300 / JCM 1318 / BCRC 11384 / CCUG 27702 / LMG 3730 / NBRC 12168 / NCIMB 10025 / NRRL B-2784 / 534), this protein is Alanine racemase (alr).